The chain runs to 511 residues: Type 2 DNA topoisomerase 6 subunit B-like (511 aa).

Residues 398–485 are disordered; the sequence is DSAQGTEDAP…RALAPGRASL (88 aa). Residues 408–422 show a composition bias toward polar residues; the sequence is DNSSLELLADTSGQA. The span at 440–451 shows a compositional bias: low complexity; the sequence is LRSARAPSPSEA. Residues 466–475 show a composition bias toward basic and acidic residues; that stretch reads RGREHREAHG.

The protein belongs to the TOP6B-like family. Heterotetramer of SPO11 and 2 TOP6BL chains. Interacts with SPO11. As to expression, detected in lung, spleen,colon and in skeletal muscle. Expressed in the ovaries, Fallopian tubes and uterus.

The protein localises to the chromosome. Functionally, component of a topoisomerase 6 complex specifically required for meiotic recombination. Together with SPO11, mediates DNA cleavage that forms the double-strand breaks (DSB) that initiate meiotic recombination. The complex promotes relaxation of negative and positive supercoiled DNA and DNA decatenation through cleavage and ligation cycles. The chain is Type 2 DNA topoisomerase 6 subunit B-like from Homo sapiens (Human).